A 188-amino-acid polypeptide reads, in one-letter code: D-glycero-beta-D-manno-heptose-1,7-bisphosphate 7-phosphatase (188 aa).

Residues C92, H94, C107, and C109 each contribute to the Zn(2+) site.

It belongs to the GmhB family.

The protein resides in the cytoplasm. The catalysed reaction is D-glycero-beta-D-manno-heptose 1,7-bisphosphate + H2O = D-glycero-beta-D-manno-heptose 1-phosphate + phosphate. It participates in nucleotide-sugar biosynthesis; ADP-L-glycero-beta-D-manno-heptose biosynthesis; ADP-L-glycero-beta-D-manno-heptose from D-glycero-beta-D-manno-heptose 7-phosphate: step 2/4. It functions in the pathway bacterial outer membrane biogenesis; LPS core biosynthesis. Its function is as follows. Converts the D-glycero-beta-D-manno-heptose 1,7-bisphosphate intermediate into D-glycero-beta-D-manno-heptose 1-phosphate by removing the phosphate group at the C-7 position. The polypeptide is D-glycero-beta-D-manno-heptose-1,7-bisphosphate 7-phosphatase (gmhB1) (Photorhabdus laumondii subsp. laumondii (strain DSM 15139 / CIP 105565 / TT01) (Photorhabdus luminescens subsp. laumondii)).